Here is a 302-residue protein sequence, read N- to C-terminus: Acetylglutamate kinase (302 aa).

Substrate contacts are provided by residues 67–68 (GG), arginine 89, and asparagine 189.

This sequence belongs to the acetylglutamate kinase family. ArgB subfamily.

Its subcellular location is the cytoplasm. The catalysed reaction is N-acetyl-L-glutamate + ATP = N-acetyl-L-glutamyl 5-phosphate + ADP. Its pathway is amino-acid biosynthesis; L-arginine biosynthesis; N(2)-acetyl-L-ornithine from L-glutamate: step 2/4. Its function is as follows. Catalyzes the ATP-dependent phosphorylation of N-acetyl-L-glutamate. The polypeptide is Acetylglutamate kinase (Streptomyces clavuligerus).